Here is a 318-residue protein sequence, read N- to C-terminus: Putative S-adenosyl-L-methionine-dependent methyltransferase MMAR_1595 (318 aa).

Residues glutamate 132 and 161 to 162 each bind S-adenosyl-L-methionine; that span reads DL.

Belongs to the UPF0677 family.

Exhibits S-adenosyl-L-methionine-dependent methyltransferase activity. This Mycobacterium marinum (strain ATCC BAA-535 / M) protein is Putative S-adenosyl-L-methionine-dependent methyltransferase MMAR_1595.